The chain runs to 428 residues: MLESLTLQPIALVNGTVNLPGSKSVSNRALLLAALAEGTTQLNNVLDSDDIRHMLNALQALGVNFRLSADRTCCEVDGLGGKLVAEQPLSLFLGNAGTAMRPLAAVLCLGNSDIVLTGEPRMKERPIGHLVDALRQGGAQIDYLEQENYPPLRLRGGFRGGELTVDGRVSSQFLTALLMTAPLAEQDTTIRIMGDLVSKPYIDITLHLMKAFGIDVGHENYQIFHIKGGQTYRSPGTYLVEGDASSASYFLAAAAIKGGTVRVTGIGKKSVQGDTKFADVLEKMGAKVTWGDDYIECSRGELQGIDMDMNHIPDAAMTIATTALFATGPTTIRNIYNWRVKETDRLTAMATELRKVGAEVEEGEDYIRVVPPVQLTAADIGTYDDHRMAMCFSLVALSDTPVTILDPKCTAKTFPDYFEQFARLSQLA.

Residues Lys-23, Ser-24, and Arg-28 each coordinate 3-phosphoshikimate. Phosphoenolpyruvate is bound at residue Lys-23. Phosphoenolpyruvate contacts are provided by Gly-97 and Arg-125. 3-phosphoshikimate-binding residues include Ser-170, Ser-171, Gln-172, Ser-198, Asp-314, Asn-337, and Lys-341. Gln-172 contributes to the phosphoenolpyruvate binding site. Asp-314 serves as the catalytic Proton acceptor. Arg-345, Arg-387, and Lys-412 together coordinate phosphoenolpyruvate.

The protein belongs to the EPSP synthase family. As to quaternary structure, monomer.

It is found in the cytoplasm. It carries out the reaction 3-phosphoshikimate + phosphoenolpyruvate = 5-O-(1-carboxyvinyl)-3-phosphoshikimate + phosphate. It functions in the pathway metabolic intermediate biosynthesis; chorismate biosynthesis; chorismate from D-erythrose 4-phosphate and phosphoenolpyruvate: step 6/7. In terms of biological role, catalyzes the transfer of the enolpyruvyl moiety of phosphoenolpyruvate (PEP) to the 5-hydroxyl of shikimate-3-phosphate (S3P) to produce enolpyruvyl shikimate-3-phosphate and inorganic phosphate. This is 3-phosphoshikimate 1-carboxyvinyltransferase from Yersinia pseudotuberculosis serotype IB (strain PB1/+).